Consider the following 220-residue polypeptide: Guanylate kinase (220 aa).

Residues 15–194 (GLMLVISSPS…AFDAVQSIVK (180 aa)) enclose the Guanylate kinase-like domain. Residue 22-29 (SPSGAGKS) participates in ATP binding.

Belongs to the guanylate kinase family.

It localises to the cytoplasm. The catalysed reaction is GMP + ATP = GDP + ADP. Its function is as follows. Essential for recycling GMP and indirectly, cGMP. This Rhizobium etli (strain ATCC 51251 / DSM 11541 / JCM 21823 / NBRC 15573 / CFN 42) protein is Guanylate kinase.